Here is an 874-residue protein sequence, read N- to C-terminus: MQSTLNLSTEEPVKRNTVKKYKIICIVLLILLVAVSLALGLVAGLRQQEEQGSCRKKCFDASHRGLEGCRCDVGCKGRGDCCWDFEDTCVQSTQIWTCNKFRCGETRLESSLCSCSDDCLQRKDCCADYKSVCQGETSWVDEDCSTAQQPQCPEGFDLPPVILFSMDGFRAEYLQTWSTLVPNINKLKTCGVHSQYLRPAYPTKTFPNHYTIVTGLYPESHGIIDNNMYDINLNKNFSLSSKEKDNPAWWQGQPIWLTAMYQGLKVGTYFWPGSDVAINGTFPSIYKIYNRSVTYEERIFTLLKWLDLPKAERPDFYTIYVEEPDSQGHNYGPVSAGVIQALQLVDKTFGLLMEGLKQRNLVNCVNIILLADHGMDQTYCDKLEYMADYFSSINFYMFEGPAPRIRTRNIPQDFFTFNSEEIVRNLSCRKPDQHFKPYLSPDLPKRLHFAKNVRIDKVNLLVDRQWQAVRNRAYSYCGGGNHGYDNEFKSMEAIFLAHGPSFKQKTEVEPFDNIEVYNLLCDLLHIQPAPNNGTHGSLNHLLKVPFYEPSHAEELSKFSVCGFTVPLPTDTLGCSCSRLQTNSDLERVNQMLDLTQDEITATEKLNLPFGRPRLIQKNKEPCLLYHREYVSGFDKTLRMPLWSSYTVPKPGDTSPLPPTVPDCLRADVRVAPSESQNCSFSLADKNITHGFLYPPANNRTSNSQYDALITSNLVPMYEAFKTMWNYFHSVLLVKYAMERNGVNVVSGPVFDYDYDGHFDAPDEIADYAVNTSVPIPTHYFVVLTSCKNQSQTPDACTGWLDVLPFVIPHRPTNVESCPENKSESLWVEERFNVHTARVRDVELLTGLDFYQEKAQPVSEILQLKTYLPVFETVI.

Over Met-1–Glu-11 the chain is Cytoplasmic. Residues Pro-12 to Ile-30 form a helical; Signal-anchor for type II membrane protein membrane-spanning segment. Over Leu-31–Ile-874 the chain is Extracellular. 2 SMB domains span residues Glu-50 to Thr-93 and Gln-94 to Ser-138. 10 disulfides stabilise this stretch: Cys-54/Cys-71, Cys-58/Cys-89, Cys-69/Cys-82, Cys-75/Cys-81, Cys-98/Cys-115, Cys-103/Cys-133, Cys-113/Cys-126, Cys-119/Cys-125, Cys-144/Cys-190, and Cys-152/Cys-364. Positions Arg-78–Asp-80 match the Cell attachment site motif. The tract at residues Pro-160 to Val-544 is phosphodiesterase. Asp-167 serves as a coordination point for Zn(2+). Position 204 (Lys-204) interacts with ATP. Thr-205 contacts Zn(2+). Thr-205 serves as the catalytic Nucleophile. Asn-226 provides a ligand contact to ATP. A glycan (N-linked (GlcNAc...) asparagine) is linked at Asn-236. ATP is bound at residue Asp-275. An N-linked (GlcNAc...) asparagine glycan is attached at Asn-279. Position 289 (Tyr-289) interacts with ATP. Asn-290 is a glycosylation site (N-linked (GlcNAc...) asparagine). Zn(2+) is bound by residues Asp-325, His-329, Asp-372, and His-373. Intrachain disulfides connect Cys-380/Cys-477, Cys-428/Cys-817, Cys-561/Cys-622, Cys-574/Cys-678, Cys-576/Cys-663, and Cys-786/Cys-796. Asn-425 carries an N-linked (GlcNAc...) asparagine glycan. His-482 provides a ligand contact to Zn(2+). Residue Asn-532 is glycosylated (N-linked (GlcNAc...) asparagine). A nuclease region spans residues Thr-581–Ile-874. N-linked (GlcNAc...) asparagine glycans are attached at residues Asn-677, Asn-686, and Asn-698. Residues Asp-751, Asp-755, His-757, and Asp-759 each contribute to the Ca(2+) site. 3 N-linked (GlcNAc...) asparagine glycosylation sites follow: Asn-770, Asn-788, and Asn-820.

It belongs to the nucleotide pyrophosphatase/phosphodiesterase family. Monomer and homodimer. Zn(2+) is required as a cofactor. In terms of processing, N-glycosylated. N-glycosylation is necessary for normal transport to the cell membrane, but is not the apical targeting signal.

Its subcellular location is the cell membrane. It is found in the apical cell membrane. The protein resides in the secreted. The catalysed reaction is a ribonucleoside 5'-triphosphate + H2O = a ribonucleoside 5'-phosphate + diphosphate + H(+). The enzyme catalyses ATP + H2O = AMP + diphosphate + H(+). It catalyses the reaction CTP + H2O = CMP + diphosphate + H(+). It carries out the reaction GTP + H2O = GMP + diphosphate + H(+). The catalysed reaction is UTP + H2O = UMP + diphosphate + H(+). The enzyme catalyses UDP-N-acetyl-alpha-D-glucosamine + H2O = N-acetyl-alpha-D-glucosamine 1-phosphate + UMP + 2 H(+). It catalyses the reaction P(1),P(3)-bis(5'-adenosyl) triphosphate + H2O = AMP + ADP + 2 H(+). It carries out the reaction P(1),P(4)-bis(5'-adenosyl) tetraphosphate + H2O = AMP + ATP + 2 H(+). The catalysed reaction is P(1),P(5)-bis(5'-adenosyl) pentaphosphate + H2O = adenosine 5'-tetraphosphate + AMP + 2 H(+). The enzyme catalyses P(1),P(4)-bis(5'-guanosyl) tetraphosphate + H2O = GMP + GTP + 2 H(+). It catalyses the reaction Hydrolytically removes 5'-nucleotides successively from the 3'-hydroxy termini of 3'-hydroxy-terminated oligonucleotides.. Hydrolase that metabolizes extracellular nucleotides, including ATP, GTP, UTP and CTP. Limits mast cells and basophils response during inflammation and during the chronic phases of allergic responses by eliminating extracellular ATP, a signaling molecule activating these cells in an autocrine manner. Metabolizes extracellular ATP in the lumen of the small intestine, and thereby prevents ATP-induced apoptosis of intestinal plasmacytoid dendritic cells. Has a broad specificity and can also hydrolyze UDP-GlcNAc into UMP and GlcNAc-1-phosphate and potentially several other intracellular nucleotide sugars, including UDP-GalNAc, CMP-NeuAc, GDP-Fuc, and UDP-GlcA. Thereby, could modulate glycan biosynthesis and protein glycosylation. Can hydrolyze extracellular dinucleoside polyphosphates, including the vasoactive adenosine polyphosphates as well. In addition, displays an alkaline phosphodiesterase activity in vitro. The polypeptide is Ectonucleotide pyrophosphatase/phosphodiesterase family member 3 (ENPP3) (Bos taurus (Bovine)).